The chain runs to 969 residues: Exoribonuclease II, mitochondrial (969 aa).

A mitochondrion-targeting transit peptide spans M1–K41. Positions R28–Q38 are enriched in basic residues. Residues R28–Q54 form a disordered region. The segment covering A40 to D51 has biased composition (basic and acidic residues). An RNB domain is found at R522 to Q853.

This sequence belongs to the RNR ribonuclease family. As to quaternary structure, MSU1 and SUV3 are the two components of the mitochondrial degradosome (mtEXO).

The protein localises to the mitochondrion matrix. It catalyses the reaction Exonucleolytic cleavage in the 3'- to 5'-direction to yield nucleoside 5'-phosphates.. Essential for mitochondrial biogenesis. Functionally, required for intron-independent turnover and processing of mitochondrial RNA. Participates in 3' mtRNA processing where it hydrolyzes single-stranded RNA or partially double-stranded RNA with 3' single-stranded tails. In Saccharomyces cerevisiae (strain ATCC 204508 / S288c) (Baker's yeast), this protein is Exoribonuclease II, mitochondrial (DSS1).